Reading from the N-terminus, the 617-residue chain is Kelch-like protein diablo (617 aa).

Residues Met-1–His-55 are disordered. Residues Thr-10–Ser-37 show a composition bias toward gly residues. A BTB domain is found at Cys-73 to Glu-140. The 103-residue stretch at Cys-175–Gly-277 folds into the BACK domain. Kelch repeat units follow at residues Val-324–Asp-370, Leu-372–Gly-418, Phe-419–Gly-465, Leu-467–Asn-512, Ile-514–Gly-559, and Gln-560–Ala-606.

The protein operates within protein modification; protein ubiquitination. In terms of biological role, probable substrate-specific adapter of an E3 ubiquitin-protein ligase complex which mediates the ubiquitination and subsequent proteasomal degradation of target proteins. May have a role in synapse differentiation and growth. The sequence is that of Kelch-like protein diablo from Drosophila mojavensis (Fruit fly).